Here is a 272-residue protein sequence, read N- to C-terminus: Type II secretion system protein C (272 aa).

Residues 1–16 (MNISKLPPLSPSVIRR) are Cytoplasmic-facing. A helical membrane pass occupies residues 17–35 (ILFYLLMLLFCQQLAMIFW). Residues 36–272 (RVGLPDNSPV…DIYMEFGGDE (237 aa)) are Periplasmic-facing.

The protein belongs to the GSP C family.

It is found in the cell inner membrane. Functionally, involved in a type II secretion system (T2SS, formerly general secretion pathway, GSP) for the export of proteins. Required for the translocation of the multiple pectic enzymes. The polypeptide is Type II secretion system protein C (outC) (Dickeya chrysanthemi (Pectobacterium chrysanthemi)).